Reading from the N-terminus, the 31-residue chain is Small protein MgtS (31 aa).

Residues 1–4 (MLGN) lie on the Periplasmic side of the membrane. A helical transmembrane segment spans residues 5 to 25 (MNVFMAVLGIILFSGFLAAYF). The Cytoplasmic portion of the chain corresponds to 26-31 (SHKWDD).

Interacts with MgtA.

It is found in the cell inner membrane. In terms of biological role, modulates intracellular Mg(2+) levels to maintain cellular integrity upon Mg(2+) limitation. Acts by binding and stabilizing the Mg(2+) transporter MgtA, thereby leading to increased intracellular level of Mg(2+). May inhibit FtsH proteolysis of MgtA. The chain is Small protein MgtS from Escherichia coli (strain K12).